Reading from the N-terminus, the 92-residue chain is Defensin Lucifensin (92 aa).

A signal peptide spans 1–23 (MKFFMVFAVTFCLALSFVSQSLA). Positions 24–52 (LPADDEAHFVDGLEALKTIEPELHGRYKR) are excised as a propeptide. 3 disulfides stabilise this stretch: cysteine 55-cysteine 82, cysteine 68-cysteine 88, and cysteine 72-cysteine 90.

The protein belongs to the invertebrate defensin family. Type 1 subfamily. In terms of processing, the disulfide bonds are essential for antimicrobial activity. As to expression, larval fat body, hemolymph and salivary glands (at protein level). Expressed in the salivary glands of all larval stages.

The protein localises to the secreted. It localises to the host cell membrane. Functionally, shows strong antibacterial activity against numerous Gram-positive bacteria. It selectively inhibits peptidoglycan biosynthesis through complex formation with the cell wall precursor lipid II (1:1 molar ratio) thus inhibiting cell wall synthesis. Shows antibacterial activity against the Gram-positive bacteria M.luteus, E.fecalis (MIC=32 mg/L), S.aureus (MIC=16 mg/L), S.carnosus (MIC=2 mg/L), S.pneumoniae (MIC=2 mg/L) and S.pyogenes (MIC=2 mg/L) and against a number of methicillin-resistant S.aureus and glycopeptide-intermediate S.aureus isolates. Does not show antibacterial activity against Gram-negative bacteria or antifungal activity against C.utilis. Shows slight antifungal activity against C.albicans. The protein is Defensin Lucifensin of Lucilia sericata (Green bottle fly).